Here is a 406-residue protein sequence, read N- to C-terminus: Acetate kinase (406 aa).

Position 7 (N7) interacts with Mg(2+). ATP is bound at residue K14. R90 is a substrate binding site. The active-site Proton donor/acceptor is the D147. ATP contacts are provided by residues 207–211, 283–285, and 331–335; these read HLGNG, DMR, and GVGEN. Residue E385 participates in Mg(2+) binding.

The protein belongs to the acetokinase family. As to quaternary structure, homodimer. The cofactor is Mg(2+). It depends on Mn(2+) as a cofactor.

The protein resides in the cytoplasm. The enzyme catalyses acetate + ATP = acetyl phosphate + ADP. It functions in the pathway metabolic intermediate biosynthesis; acetyl-CoA biosynthesis; acetyl-CoA from acetate: step 1/2. In terms of biological role, catalyzes the formation of acetyl phosphate from acetate and ATP. Can also catalyze the reverse reaction. The chain is Acetate kinase from Thermosipho africanus (strain TCF52B).